The chain runs to 112 residues: Secretoglobin family 2B member 20 (112 aa).

An N-terminal signal peptide occupies residues 1–23; the sequence is MKGTLLLLGLLVTGELSFQTTEA. Asn50 carries an N-linked (GlcNAc...) asparagine glycan.

It belongs to the secretoglobin family. In terms of tissue distribution, expressed in lacrimal gland, at higher level in males than females. Expressed in the submandibular gland.

The protein resides in the secreted. In Mus musculus (Mouse), this protein is Secretoglobin family 2B member 20 (Scgb2b20).